The chain runs to 487 residues: Gasdermin-D (487 aa).

At Tyr38 the chain carries Phosphotyrosine. S-(2-succinyl)cysteine occurs at positions 39, 57, and 77. Transmembrane regions (beta stranded) follow at residues 92-98 (QGRVMLS) and 104-109 (KISGGA). Cys122 carries the post-translational modification S-(2-succinyl)cysteine. The next 2 beta stranded transmembrane spans lie at 181-187 (GSGQFTL) and 192-198 (CLKGEGK). Residues Cys192 and Cys265 each carry the S-(2-succinyl)cysteine modification. The S-palmitoyl cysteine moiety is linked to residue Cys192. The interval 278 to 298 (IDEEELIEAADFQGLYAEVKA) is linker helix loop. S-(2-succinyl)cysteine is present on residues Cys299, Cys434, and Cys487.

Belongs to the gasdermin family. Homooligomer; homooligomeric ring-shaped pore complex containing 27-28 subunits when inserted in the membrane. Homooligomerization is promoted by the mTORC1 complex in macrophages. In response to a canonical inflammasome stimulus, such as nigericin, recruited to NLRP3 inflammasone with similar kinetics to that of uncleaved CASP1 precursor. Although this recruitment is also observed in the absence of PYCARD, it is more efficient in its presence. In terms of processing, cleavage at Asp-276 by CASP1 (mature and uncleaved precursor forms), CASP4/CASP11 or CASP8 relieves autoinhibition and is sufficient to initiate pyroptosis. Cleavage by CASP1 and CASP4/CASP11 is not strictly dependent on the consensus cleavage site on GSDMD but depends on an exosite interface on CASP1 that recognizes and binds the Gasdermin-D, C-terminal (GSDMD-CT) part. Cleavage by CASP8 takes place following inactivation of MAP3K7/TAK1 by Yersinia toxin YopJ. Cleavage at Asp-88 by CASP3 or CASP7 inactivates the ability to mediate pyroptosis, but generates the Gasdermin-D, p13 chain, which translocates to the nucleus and acts as a transcription regulator. Cleavage by papain allergen generates the Gasdermin-D, p40 chain. Palmitoylated at Cys-192 by ZDHHC5 and ZDHHC9 in response to microbial infection and danger signals. May also be palmitoylated by ZDHHC7. Palmitoylation takes place before cleavage by caspases (CASP1, CASP4, CASP5 or CASP8) and is required for membrane translocation and pore formation. Depalmitoylated by LYPLA2. Post-translationally, succination of Cys-192 by the Krebs cycle intermediate fumarate, which leads to S-(2-succinyl)cysteine residues, inhibits processing by caspases, and ability to initiate pyroptosis. Succination modification is catalyzed by a non-enzymatic reaction caused by an accumulation of fumarate. In terms of processing, glycosylated: O-GlcNAcylation by OGT leads to reduced cleavage by CASP4 and decreased LPS-induced endothelial cell pyroptosis. In terms of tissue distribution, highly expressed in brain endothelial cells.

It is found in the cytoplasm. Its subcellular location is the cytosol. It localises to the inflammasome. The protein resides in the cell membrane. The protein localises to the secreted. It is found in the mitochondrion membrane. Its subcellular location is the nucleus. The full-length protein before cleavage is inactive: intramolecular interactions between N- and C-terminal domains mediate autoinhibition in the absence of activation signal. The intrinsic pyroptosis-inducing activity is carried by the released N-terminal moiety (Gasdermin-D, N-terminal) following cleavage by inflammatory caspases CASP1, CASP4/CASP11 or CASP8. Cleavage at Asp-88 by CASP3 or CASP7 inactivates the ability to mediate pyroptosis. Pore formation is specifically inhibited by VHH(GSDMD-1) nanobody, protecting against excessive pyroptosis. Inhibited by small molecule NU6300, which covalently reacts with Cys-191, thereby preventing palmitoylation and pyroptosis. Precursor of a pore-forming protein that plays a key role in host defense against pathogen infection and danger signals. This form constitutes the precursor of the pore-forming protein: upon cleavage, the released N-terminal moiety (Gasdermin-D, N-terminal) binds to membranes and forms pores, triggering pyroptosis. Functionally, promotes pyroptosis in response to microbial infection and danger signals. Produced by the cleavage of gasdermin-D by inflammatory caspases CASP1 or CASP4/CASP11 in response to canonical, as well as non-canonical (such as cytosolic LPS) inflammasome activators. After cleavage, moves to the plasma membrane where it strongly binds to inner leaflet lipids, including monophosphorylated phosphatidylinositols, such as phosphatidylinositol 4-phosphate, bisphosphorylated phosphatidylinositols, such as phosphatidylinositol (4,5)-bisphosphate, as well as phosphatidylinositol (3,4,5)-bisphosphate, and more weakly to phosphatidic acid and phosphatidylserine. Homooligomerizes within the membrane and forms pores of 10-15 nanometers (nm) of inner diameter, allowing the release of mature interleukin-1 (IL1B and IL18) and triggering pyroptosis. Gasdermin pores also allow the release of mature caspase-7 (CASP7). In some, but not all, cells types, pyroptosis is followed by pyroptotic cell death, which is caused by downstream activation of ninjurin-1 (NINJ1), which mediates membrane rupture (cytolysis). Also forms pores in the mitochondrial membrane, resulting in release of mitochondrial DNA (mtDNA) into the cytosol. Gasdermin-D, N-terminal released from pyroptotic cells into the extracellular milieu rapidly binds to and kills both Gram-negative and Gram-positive bacteria, without harming neighboring mammalian cells, as it does not disrupt the plasma membrane from the outside due to lipid-binding specificity. Under cell culture conditions, also active against intracellular bacteria, such as Listeria monocytogenes. Also active in response to MAP3K7/TAK1 inactivation by Yersinia toxin YopJ, which triggers cleavage by CASP8 and subsequent activation. Required for mucosal tissue defense against enteric pathogens. Activation of the non-canonical inflammasome in brain endothelial cells can lead to excessive pyroptosis, leading to blood-brain barrier breakdown. Strongly binds to bacterial and mitochondrial lipids, including cardiolipin. Does not bind to unphosphorylated phosphatidylinositol, phosphatidylethanolamine nor phosphatidylcholine. In terms of biological role, transcription coactivator produced by the cleavage by CASP3 or CASP7 in the upper small intestine in response to dietary antigens. Required to maintain food tolerance in small intestine: translocates to the nucleus and acts as a coactivator for STAT1 to induce the transcription of CIITA and MHC class II molecules, which in turn induce type 1 regulatory T (Tr1) cells in upper small intestine. Its function is as follows. Produced by the cleavage by papain allergen. After cleavage, moves to the plasma membrane and homooligomerizes within the membrane and forms pores of 10-15 nanometers (nm) of inner diameter, allowing the specific release of mature interleukin-33 (IL33), promoting type 2 inflammatory immune response. This chain is Gasdermin-D, found in Mus musculus (Mouse).